The sequence spans 605 residues: DNA primase (605 aa).

The CHC2-type zinc finger occupies Cys38 to Cys62. Positions Asp260 to Gly341 constitute a Toprim domain. 3 residues coordinate Mg(2+): Glu266, Asp310, and Asp312.

The protein belongs to the DnaG primase family. Monomer. Interacts with DnaB. The cofactor is Zn(2+). Mg(2+) serves as cofactor.

It carries out the reaction ssDNA + n NTP = ssDNA/pppN(pN)n-1 hybrid + (n-1) diphosphate.. RNA polymerase that catalyzes the synthesis of short RNA molecules used as primers for DNA polymerase during DNA replication. This chain is DNA primase, found in Staphylococcus aureus.